Consider the following 499-residue polypeptide: Calcium/calmodulin-dependent protein kinase type II subunit delta (499 aa).

A2 is modified (N-acetylalanine). Residues 14 to 272 (YQLFEELGKG…ASEALKHPWI (259 aa)) form the Protein kinase domain. ATP is bound by residues 20 to 28 (LGKGAFSVV) and K43. Catalysis depends on D136, which acts as the Proton acceptor. The tract at residues 283-292 (HRQETVDCLK) is autoinhibitory domain. T287 carries the post-translational modification Phosphothreonine; by autocatalysis. Residues 291–301 (LKKFNARRKLK) form a calmodulin-binding region. Residues T306 and T307 each carry the phosphothreonine; by autocatalysis modification. The residue at position 315 (S315) is a Phosphoserine. Residue K318 is modified to N6-acetyllysine. Phosphoserine is present on residues S319 and S330. At T331 the chain carries Phosphothreonine. Position 333 is a phosphoserine (S333). T336 and T337 each carry phosphothreonine. Phosphoserine occurs at positions 404, 490, and 494.

Belongs to the protein kinase superfamily. CAMK Ser/Thr protein kinase family. CaMK subfamily. CAMK2 is composed of 4 different chains: alpha (CAMK2A), beta (CAMK2B), gamma (CAMK2G), and delta (CAMK2D). The different isoforms assemble into homo- or heteromultimeric holoenzymes composed of 12 subunits with two hexameric rings stacked one on top of the other. Interacts with RRAD CACNB2. Autophosphorylation of Thr-287 following activation by Ca(2+)/calmodulin. Phosphorylation of Thr-287 locks the kinase into an activated state.

The protein resides in the cell membrane. The protein localises to the sarcolemma. Its subcellular location is the sarcoplasmic reticulum membrane. It carries out the reaction L-seryl-[protein] + ATP = O-phospho-L-seryl-[protein] + ADP + H(+). The catalysed reaction is L-threonyl-[protein] + ATP = O-phospho-L-threonyl-[protein] + ADP + H(+). Its activity is regulated as follows. Activated by Ca(2+)/calmodulin. Binding of calmodulin results in conformational change that relieves intrasteric autoinhibition and allows autophosphorylation of Thr-287 which turns the kinase in a constitutively active form and confers to the kinase a Ca(2+)-independent activity. Calcium/calmodulin-dependent protein kinase involved in the regulation of Ca(2+) homeostatis and excitation-contraction coupling (ECC) in heart by targeting ion channels, transporters and accessory proteins involved in Ca(2+) influx into the myocyte, Ca(2+) release from the sarcoplasmic reticulum (SR), SR Ca(2+) uptake and Na(+) and K(+) channel transport. Targets also transcription factors and signaling molecules to regulate heart function. In its activated form, is involved in the pathogenesis of dilated cardiomyopathy and heart failure. Contributes to cardiac decompensation and heart failure by regulating SR Ca(2+) release via direct phosphorylation of RYR2 Ca(2+) channel on 'Ser-2808'. In the nucleus, phosphorylates the MEF2 repressor HDAC4, promoting its nuclear export and binding to 14-3-3 protein, and expression of MEF2 and genes involved in the hypertrophic program. Is essential for left ventricular remodeling responses to myocardial infarction. In pathological myocardial remodeling acts downstream of the beta adrenergic receptor signaling cascade to regulate key proteins involved in ECC. Regulates Ca(2+) influx to myocytes by binding and phosphorylating the L-type Ca(2+) channel subunit beta-2 CACNB2. In addition to Ca(2+) channels, can target and regulate the cardiac sarcolemmal Na(+) channel Nav1.5/SCN5A and the K+ channel Kv4.3/KCND3, which contribute to arrhythmogenesis in heart failure. Phosphorylates phospholamban (PLN/PLB), an endogenous inhibitor of SERCA2A/ATP2A2, contributing to the enhancement of SR Ca(2+) uptake that may be important in frequency-dependent acceleration of relaxation (FDAR) and maintenance of contractile function during acidosis. May participate in the modulation of skeletal muscle function in response to exercise, by regulating SR Ca(2+) transport through phosphorylation of PLN/PLB and triadin, a ryanodine receptor-coupling factor. In response to interferon-gamma (IFN-gamma) stimulation, catalyzes phosphorylation of STAT1, stimulating the JAK-STAT signaling pathway. This chain is Calcium/calmodulin-dependent protein kinase type II subunit delta (CAMK2D), found in Sus scrofa (Pig).